A 346-amino-acid polypeptide reads, in one-letter code: N-acetyl-gamma-glutamyl-phosphate reductase (346 aa).

C154 is a catalytic residue.

Belongs to the NAGSA dehydrogenase family. Type 1 subfamily.

It localises to the cytoplasm. It catalyses the reaction N-acetyl-L-glutamate 5-semialdehyde + phosphate + NADP(+) = N-acetyl-L-glutamyl 5-phosphate + NADPH + H(+). Its pathway is amino-acid biosynthesis; L-arginine biosynthesis; N(2)-acetyl-L-ornithine from L-glutamate: step 3/4. Functionally, catalyzes the NADPH-dependent reduction of N-acetyl-5-glutamyl phosphate to yield N-acetyl-L-glutamate 5-semialdehyde. In Rhodopirellula baltica (strain DSM 10527 / NCIMB 13988 / SH1), this protein is N-acetyl-gamma-glutamyl-phosphate reductase.